Here is a 216-residue protein sequence, read N- to C-terminus: Large ribosomal subunit protein uL3 (216 aa).

N5-methylglutamine is present on Gln157.

It belongs to the universal ribosomal protein uL3 family. Part of the 50S ribosomal subunit. Forms a cluster with proteins L14 and L19. Post-translationally, methylated by PrmB.

Its function is as follows. One of the primary rRNA binding proteins, it binds directly near the 3'-end of the 23S rRNA, where it nucleates assembly of the 50S subunit. This chain is Large ribosomal subunit protein uL3, found in Xanthomonas axonopodis pv. citri (strain 306).